A 511-amino-acid chain; its full sequence is 2-methylbutanal oxime monooxygenase (511 aa).

2 helical membrane-spanning segments follow: residues 10–30 (PPQW…LLLF) and 304–324 (ILMN…TWAF). Position 451 (C451) interacts with heme.

This sequence belongs to the cytochrome P450 family. The cofactor is heme. Expressed in storage roots, primary roots, petioles and vascular tissues. Expressed in the outer cortex cells, the endodermis and around the xylem, phloem cells and laticifers.

The protein localises to the microsome membrane. The catalysed reaction is (1E,2S)-2-methylbutanal oxime + reduced [NADPH--hemoprotein reductase] + O2 = 2-hydroxy-2-methylbutanenitrile + oxidized [NADPH--hemoprotein reductase] + 2 H2O + H(+). It carries out the reaction (E)-2-methylpropanal oxime + reduced [NADPH--hemoprotein reductase] + O2 = 2-hydroxy-2-methylpropanenitrile + oxidized [NADPH--hemoprotein reductase] + 2 H2O + H(+). Catalyzes the conversion of (E)-2-methylpropanal oxime (valox) to 2-hydroxy-2-methylpropanenitrile (acetone cyanohydrin) and of (E)-2-methylbutanal oxime (ilox) to 2-hydroxy-2-methylbutyronitrile. The reaction takes place in three steps. First, the oxime is isomerized to the (Z)- isomer, next the (Z)-isomer is dehydrated to the corresponding nitrile, followed by a C-hydroxylation of the nitrile. Can use both aliphatic and aromatic oximes as substrates. This chain is 2-methylbutanal oxime monooxygenase (CYP71E7), found in Manihot esculenta (Cassava).